The primary structure comprises 190 residues: 6,7-dimethyl-8-ribityllumazine synthase (190 aa).

5-amino-6-(D-ribitylamino)uracil contacts are provided by residues Trp-31, 65 to 67 (SFE), and 89 to 91 (CVI). 94 to 95 (ET) provides a ligand contact to (2S)-2-hydroxy-3-oxobutyl phosphate. The Proton donor role is filled by His-97. Phe-122 serves as a coordination point for 5-amino-6-(D-ribitylamino)uracil. A (2S)-2-hydroxy-3-oxobutyl phosphate-binding site is contributed by Arg-136.

It belongs to the DMRL synthase family.

It catalyses the reaction (2S)-2-hydroxy-3-oxobutyl phosphate + 5-amino-6-(D-ribitylamino)uracil = 6,7-dimethyl-8-(1-D-ribityl)lumazine + phosphate + 2 H2O + H(+). Its pathway is cofactor biosynthesis; riboflavin biosynthesis; riboflavin from 2-hydroxy-3-oxobutyl phosphate and 5-amino-6-(D-ribitylamino)uracil: step 1/2. Functionally, catalyzes the formation of 6,7-dimethyl-8-ribityllumazine by condensation of 5-amino-6-(D-ribitylamino)uracil with 3,4-dihydroxy-2-butanone 4-phosphate. This is the penultimate step in the biosynthesis of riboflavin. This chain is 6,7-dimethyl-8-ribityllumazine synthase, found in Flavobacterium johnsoniae (strain ATCC 17061 / DSM 2064 / JCM 8514 / BCRC 14874 / CCUG 350202 / NBRC 14942 / NCIMB 11054 / UW101) (Cytophaga johnsonae).